A 388-amino-acid chain; its full sequence is Arginine biosynthesis bifunctional protein ArgJ (388 aa).

T150, K172, T183, E263, N383, and S388 together coordinate substrate. Residue T183 is the Nucleophile of the active site.

Belongs to the ArgJ family. Heterotetramer of two alpha and two beta chains.

The protein localises to the cytoplasm. The enzyme catalyses N(2)-acetyl-L-ornithine + L-glutamate = N-acetyl-L-glutamate + L-ornithine. The catalysed reaction is L-glutamate + acetyl-CoA = N-acetyl-L-glutamate + CoA + H(+). The protein operates within amino-acid biosynthesis; L-arginine biosynthesis; L-ornithine and N-acetyl-L-glutamate from L-glutamate and N(2)-acetyl-L-ornithine (cyclic): step 1/1. It functions in the pathway amino-acid biosynthesis; L-arginine biosynthesis; N(2)-acetyl-L-ornithine from L-glutamate: step 1/4. Its function is as follows. Catalyzes two activities which are involved in the cyclic version of arginine biosynthesis: the synthesis of N-acetylglutamate from glutamate and acetyl-CoA as the acetyl donor, and of ornithine by transacetylation between N(2)-acetylornithine and glutamate. The protein is Arginine biosynthesis bifunctional protein ArgJ of Corynebacterium glutamicum (strain ATCC 13032 / DSM 20300 / JCM 1318 / BCRC 11384 / CCUG 27702 / LMG 3730 / NBRC 12168 / NCIMB 10025 / NRRL B-2784 / 534).